The sequence spans 164 residues: NADH-quinone oxidoreductase subunit I (164 aa).

2 4Fe-4S ferredoxin-type domains span residues 55-85 (LRRY…IDAE) and 95-124 (TRYD…EGPN). The [4Fe-4S] cluster site is built by Cys-65, Cys-68, Cys-71, Cys-75, Cys-104, Cys-107, Cys-110, and Cys-114.

It belongs to the complex I 23 kDa subunit family. As to quaternary structure, NDH-1 is composed of 14 different subunits. Subunits NuoA, H, J, K, L, M, N constitute the membrane sector of the complex. It depends on [4Fe-4S] cluster as a cofactor.

Its subcellular location is the cell inner membrane. It catalyses the reaction a quinone + NADH + 5 H(+)(in) = a quinol + NAD(+) + 4 H(+)(out). In terms of biological role, NDH-1 shuttles electrons from NADH, via FMN and iron-sulfur (Fe-S) centers, to quinones in the respiratory chain. The immediate electron acceptor for the enzyme in this species is believed to be ubiquinone. Couples the redox reaction to proton translocation (for every two electrons transferred, four hydrogen ions are translocated across the cytoplasmic membrane), and thus conserves the redox energy in a proton gradient. This is NADH-quinone oxidoreductase subunit I from Dinoroseobacter shibae (strain DSM 16493 / NCIMB 14021 / DFL 12).